Consider the following 697-residue polypeptide: Ribosomal RNA large subunit methyltransferase K/L (697 aa).

A THUMP domain is found at Ile43–Leu154.

This sequence belongs to the methyltransferase superfamily. RlmKL family.

It is found in the cytoplasm. It catalyses the reaction guanosine(2445) in 23S rRNA + S-adenosyl-L-methionine = N(2)-methylguanosine(2445) in 23S rRNA + S-adenosyl-L-homocysteine + H(+). The enzyme catalyses guanosine(2069) in 23S rRNA + S-adenosyl-L-methionine = N(2)-methylguanosine(2069) in 23S rRNA + S-adenosyl-L-homocysteine + H(+). Functionally, specifically methylates the guanine in position 2445 (m2G2445) and the guanine in position 2069 (m7G2069) of 23S rRNA. In Buchnera aphidicola subsp. Schizaphis graminum (strain Sg), this protein is Ribosomal RNA large subunit methyltransferase K/L.